Reading from the N-terminus, the 312-residue chain is Taste receptor type 2 member 62 (312 aa).

The Extracellular segment spans residues 1–4; that stretch reads MPSL. The chain crosses the membrane as a helical span at residues 5 to 27; the sequence is PTLIFIAIFCLESLAAMLQNGFL. Residues 28–39 are Cytoplasmic-facing; it reads VTMLGREWVRCR. A helical transmembrane segment spans residues 40–62; sequence MLSTSDMIVACLAASRFCLHGVA. The Extracellular segment spans residues 63–81; it reads MANNLLASLDFSRAVPYMN. The helical transmembrane segment at 82-104 threads the bilayer; sequence IFWDLFNALTLWFTALLAAFYCV. The Cytoplasmic portion of the chain corresponds to 105-127; sequence KISSFSHPTFAWLKWRISRLVPK. Residues 128 to 150 form a helical membrane-spanning segment; that stretch reads LIKGSLIICGLEVISSATGNILF. The Extracellular segment spans residues 151–182; that stretch reads GQRKVSLSSYRNETLVYRVQASFQLYFFLYDG. Residue Asn-162 is glycosylated (N-linked (GlcNAc...) asparagine). Residues 183–205 traverse the membrane as a helical segment; the sequence is FVWSIPFLLFLVSTVLLIVSLCW. Residues 206-231 lie on the Cytoplasmic side of the membrane; it reads QLGQMRDLRPGPCDPSTQAYTMALKS. The helical transmembrane segment at 232-254 threads the bilayer; it reads LTFSLIFCTLYFLSLFASALKII. Residues 255 to 258 are Extracellular-facing; that stretch reads NFQN. The chain crosses the membrane as a helical span at residues 259–281; the sequence is HWHWAWEVLIYANICLHSTVLVL. Residues 282–312 are Cytoplasmic-facing; that stretch reads RSPKLKKGLKTWPQLQCPCDAGSQGFGRCWP.

The protein belongs to the G-protein coupled receptor T2R family.

The protein resides in the membrane. Functionally, receptor that may play a role in the perception of bitterness and is gustducin-linked. May play a role in sensing the chemical composition of the gastrointestinal content. The activity of this receptor may stimulate alpha gustducin, mediate PLC-beta-2 activation and lead to the gating of TRPM5. This Pan paniscus (Pygmy chimpanzee) protein is Taste receptor type 2 member 62 (TAS2R62).